The sequence spans 175 residues: Glutamyl-tRNA(Gln) amidotransferase subunit F, mitochondrial (175 aa).

Residues 1-19 (MLKVSARHAPVLRLPRRFY) constitute a mitochondrion transit peptide.

It belongs to the GatF family. As to quaternary structure, subunit of the heterotrimeric GatFAB amidotransferase (AdT) complex, composed of A, B and F subunits.

The protein localises to the mitochondrion inner membrane. The enzyme catalyses L-glutamyl-tRNA(Gln) + L-glutamine + ATP + H2O = L-glutaminyl-tRNA(Gln) + L-glutamate + ADP + phosphate + H(+). Allows the formation of correctly charged Gln-tRNA(Gln) through the transamidation of misacylated Glu-tRNA(Gln) in the mitochondria. The reaction takes place in the presence of glutamine and ATP through an activated gamma-phospho-Glu-tRNA(Gln). Required for proper protein synthesis within the mitochondrion. This chain is Glutamyl-tRNA(Gln) amidotransferase subunit F, mitochondrial, found in Lachancea thermotolerans (strain ATCC 56472 / CBS 6340 / NRRL Y-8284) (Yeast).